The sequence spans 105 residues: Large ribosomal subunit protein uL24 (105 aa).

The protein belongs to the universal ribosomal protein uL24 family. In terms of assembly, part of the 50S ribosomal subunit.

In terms of biological role, one of two assembly initiator proteins, it binds directly to the 5'-end of the 23S rRNA, where it nucleates assembly of the 50S subunit. One of the proteins that surrounds the polypeptide exit tunnel on the outside of the subunit. The sequence is that of Large ribosomal subunit protein uL24 from Lachnoclostridium phytofermentans (strain ATCC 700394 / DSM 18823 / ISDg) (Clostridium phytofermentans).